The chain runs to 339 residues: Type IV secretion system protein PtlH homolog (339 aa).

The protein belongs to the GSP E family.

The protein is Type IV secretion system protein PtlH homolog (ptlH) of Bordetella parapertussis (strain 12822 / ATCC BAA-587 / NCTC 13253).